Here is an 87-residue protein sequence, read N- to C-terminus: Small ribosomal subunit protein uS17 (87 aa).

This sequence belongs to the universal ribosomal protein uS17 family. As to quaternary structure, part of the 30S ribosomal subunit.

One of the primary rRNA binding proteins, it binds specifically to the 5'-end of 16S ribosomal RNA. The chain is Small ribosomal subunit protein uS17 from Staphylococcus haemolyticus (strain JCSC1435).